The following is a 158-amino-acid chain: 6,7-dimethyl-8-ribityllumazine synthase (158 aa).

5-amino-6-(D-ribitylamino)uracil-binding positions include F22, A57–E59, and T84–I86. G89–T90 is a (2S)-2-hydroxy-3-oxobutyl phosphate binding site. Catalysis depends on H92, which acts as the Proton donor. Residue F117 coordinates 5-amino-6-(D-ribitylamino)uracil. R131 serves as a coordination point for (2S)-2-hydroxy-3-oxobutyl phosphate.

This sequence belongs to the DMRL synthase family. As to quaternary structure, forms an icosahedral capsid composed of 60 subunits, arranged as a dodecamer of pentamers.

It catalyses the reaction (2S)-2-hydroxy-3-oxobutyl phosphate + 5-amino-6-(D-ribitylamino)uracil = 6,7-dimethyl-8-(1-D-ribityl)lumazine + phosphate + 2 H2O + H(+). The protein operates within cofactor biosynthesis; riboflavin biosynthesis; riboflavin from 2-hydroxy-3-oxobutyl phosphate and 5-amino-6-(D-ribitylamino)uracil: step 1/2. In terms of biological role, catalyzes the formation of 6,7-dimethyl-8-ribityllumazine by condensation of 5-amino-6-(D-ribitylamino)uracil with 3,4-dihydroxy-2-butanone 4-phosphate. This is the penultimate step in the biosynthesis of riboflavin. The chain is 6,7-dimethyl-8-ribityllumazine synthase from Pectobacterium atrosepticum (strain SCRI 1043 / ATCC BAA-672) (Erwinia carotovora subsp. atroseptica).